The chain runs to 396 residues: Elongation factor Tu (396 aa).

Positions 10 to 205 constitute a tr-type G domain; that stretch reads KPHVNIGTIG…AVDESIPDPV (196 aa). The tract at residues 19–26 is G1; sequence GHVDHGKT. 19-26 serves as a coordination point for GTP; sequence GHVDHGKT. Threonine 26 contributes to the Mg(2+) binding site. Residues 62-66 are G2; sequence GITIN. Residues 83–86 are G3; the sequence is DAPG. GTP contacts are provided by residues 83–87 and 138–141; these read DAPGH and NKAD. Residues 138–141 are G4; sequence NKAD. The tract at residues 175–177 is G5; that stretch reads SGL.

It belongs to the TRAFAC class translation factor GTPase superfamily. Classic translation factor GTPase family. EF-Tu/EF-1A subfamily. As to quaternary structure, monomer.

It is found in the cytoplasm. It catalyses the reaction GTP + H2O = GDP + phosphate + H(+). Functionally, GTP hydrolase that promotes the GTP-dependent binding of aminoacyl-tRNA to the A-site of ribosomes during protein biosynthesis. This Nocardia farcinica (strain IFM 10152) protein is Elongation factor Tu.